The chain runs to 162 residues: 2-C-methyl-D-erythritol 2,4-cyclodiphosphate synthase (162 aa).

Asp12 and His14 together coordinate a divalent metal cation. 4-CDP-2-C-methyl-D-erythritol 2-phosphate is bound by residues 12-14 (DVH) and 38-39 (HS). His46 is a binding site for a divalent metal cation. Residues 60–62 (DIG), 136–139 (TTTE), Phe143, and Arg146 contribute to the 4-CDP-2-C-methyl-D-erythritol 2-phosphate site.

It belongs to the IspF family. Homotrimer. Requires a divalent metal cation as cofactor.

The catalysed reaction is 4-CDP-2-C-methyl-D-erythritol 2-phosphate = 2-C-methyl-D-erythritol 2,4-cyclic diphosphate + CMP. Its pathway is isoprenoid biosynthesis; isopentenyl diphosphate biosynthesis via DXP pathway; isopentenyl diphosphate from 1-deoxy-D-xylulose 5-phosphate: step 4/6. Its function is as follows. Involved in the biosynthesis of isopentenyl diphosphate (IPP) and dimethylallyl diphosphate (DMAPP), two major building blocks of isoprenoid compounds. Catalyzes the conversion of 4-diphosphocytidyl-2-C-methyl-D-erythritol 2-phosphate (CDP-ME2P) to 2-C-methyl-D-erythritol 2,4-cyclodiphosphate (ME-CPP) with a corresponding release of cytidine 5-monophosphate (CMP). This Porphyromonas gingivalis (strain ATCC BAA-308 / W83) protein is 2-C-methyl-D-erythritol 2,4-cyclodiphosphate synthase.